Reading from the N-terminus, the 1072-residue chain is Carbamoyl phosphate synthase large chain (1072 aa).

The segment at 1-401 (MPKRLDINTI…SLLKAVRSLE (401 aa)) is carboxyphosphate synthetic domain. Residues Arg129, Arg169, Gly175, Gly176, Lys208, Ile210, Glu215, Gly241, Val242, His243, Gln284, and Glu298 each coordinate ATP. Positions 133–327 (RTLMQELNEP…IAKLAAKIAV (195 aa)) constitute an ATP-grasp 1 domain. Gln284, Glu298, and Asn300 together coordinate Mg(2+). Residues Gln284, Glu298, and Asn300 each coordinate Mn(2+). Residues 402–546 (LGIYHLELDH…YSTYADENES (145 aa)) form an oligomerization domain region. A carbamoyl phosphate synthetic domain region spans residues 547–929 (IVTDRKSVVV…ALYKGLVASG (383 aa)). An ATP-grasp 2 domain is found at 671–861 (EAALTKLGIP…MANVATKVIL (191 aa)). Residues Arg707, Arg746, Glu752, Gly777, Val778, His779, Ser780, Gln820, and Glu832 each contribute to the ATP site. Mg(2+) is bound by residues Gln820, Glu832, and Asn834. 3 residues coordinate Mn(2+): Gln820, Glu832, and Asn834. The MGS-like domain maps to 930 to 1072 (INIPTHGSVI…QTKRHEVVHA (143 aa)). The segment at 930–1072 (INIPTHGSVI…QTKRHEVVHA (143 aa)) is allosteric domain.

This sequence belongs to the CarB family. In terms of assembly, composed of two chains; the small (or glutamine) chain promotes the hydrolysis of glutamine to ammonia, which is used by the large (or ammonia) chain to synthesize carbamoyl phosphate. Tetramer of heterodimers (alpha,beta)4. The cofactor is Mg(2+). Requires Mn(2+) as cofactor.

The catalysed reaction is hydrogencarbonate + L-glutamine + 2 ATP + H2O = carbamoyl phosphate + L-glutamate + 2 ADP + phosphate + 2 H(+). It catalyses the reaction hydrogencarbonate + NH4(+) + 2 ATP = carbamoyl phosphate + 2 ADP + phosphate + 2 H(+). It participates in amino-acid biosynthesis; L-arginine biosynthesis; carbamoyl phosphate from bicarbonate: step 1/1. The protein operates within pyrimidine metabolism; UMP biosynthesis via de novo pathway; (S)-dihydroorotate from bicarbonate: step 1/3. Its function is as follows. Large subunit of the glutamine-dependent carbamoyl phosphate synthetase (CPSase). CPSase catalyzes the formation of carbamoyl phosphate from the ammonia moiety of glutamine, carbonate, and phosphate donated by ATP, constituting the first step of 2 biosynthetic pathways, one leading to arginine and/or urea and the other to pyrimidine nucleotides. The large subunit (synthetase) binds the substrates ammonia (free or transferred from glutamine from the small subunit), hydrogencarbonate and ATP and carries out an ATP-coupled ligase reaction, activating hydrogencarbonate by forming carboxy phosphate which reacts with ammonia to form carbamoyl phosphate. This chain is Carbamoyl phosphate synthase large chain, found in Bacillus thuringiensis subsp. konkukian (strain 97-27).